Consider the following 563-residue polypeptide: PHD finger protein EHD3 (563 aa).

The disordered stretch occupies residues methionine 1–lysine 46. 3 PHD-type zinc fingers span residues leucine 296–lysine 348, serine 420–cysteine 472, and serine 474–arginine 524.

As to quaternary structure, interacts with TRX1. As to expression, expressed in shoot apical meristem and leaves.

It localises to the nucleus. Functionally, probable transcription factor involved in the regulation of floral induction under long day (LD) conditions. Promotes photoperiodic flowering by repressing GHD7, a major floral repressor. Seems to function independently of HD1. This is PHD finger protein EHD3 from Oryza sativa subsp. japonica (Rice).